Here is a 254-residue protein sequence, read N- to C-terminus: MARRRQLYEGKAKILFEGPEPGTLVQYFKDDATAGNGAKKGIITGKGVLNNRISEHLMLRLHDIGIPTHFIRRLNMREQLIREVEIIPLEVVVRNVAAGSLAKRLGIPEGTRLPRTIIEYYYKNDSLNDPMVSEEHITAFGWACTHDLDDMVALTMRTNDFLSGLFVGIGITLVDFKLEFGRLWEGEDMRIVLADEISPDNCRLWDAKTSEKLDKDRFRRDMGRVEEAYQEVAWRLGILPEATNSDMKGPEVMQ.

It belongs to the SAICAR synthetase family.

The catalysed reaction is 5-amino-1-(5-phospho-D-ribosyl)imidazole-4-carboxylate + L-aspartate + ATP = (2S)-2-[5-amino-1-(5-phospho-beta-D-ribosyl)imidazole-4-carboxamido]succinate + ADP + phosphate + 2 H(+). Its pathway is purine metabolism; IMP biosynthesis via de novo pathway; 5-amino-1-(5-phospho-D-ribosyl)imidazole-4-carboxamide from 5-amino-1-(5-phospho-D-ribosyl)imidazole-4-carboxylate: step 1/2. The chain is Phosphoribosylaminoimidazole-succinocarboxamide synthase from Gluconacetobacter diazotrophicus (strain ATCC 49037 / DSM 5601 / CCUG 37298 / CIP 103539 / LMG 7603 / PAl5).